Reading from the N-terminus, the 363-residue chain is Adenosine deaminase (363 aa).

Zn(2+) contacts are provided by His-42 and His-44. A purine D-ribonucleoside contacts are provided by residues 44–46 (HLD), Asp-172, and Gly-201. A gating helix loop; regulates binding affinity for substrates and thus substrate selectivity region spans residues 170 to 184 (IGDTGHEAANIKASA). Residue His-226 participates in Zn(2+) binding. A purine D-ribonucleoside-binding residues include Glu-229, His-253, and Asp-310. Position 310 (Asp-310) interacts with Zn(2+).

The protein belongs to the metallo-dependent hydrolases superfamily. Adenosine and AMP deaminases family. It depends on Zn(2+) as a cofactor.

It carries out the reaction adenosine + H2O + H(+) = inosine + NH4(+). The enzyme catalyses S-methyl-5'-thioadenosine + H2O + H(+) = S-methyl-5'-thioinosine + NH4(+). The protein operates within purine metabolism; purine nucleoside salvage. Its activity is regulated as follows. Inhibited by coformycin and methylthiocoformycin (MT-coformycin). In terms of biological role, catalyzes the hydrolytic deamination of adenosine to produce inosine. Unlike mammalian adenosine deaminases, also catalyzes the deamination of 5'-methylthioadenosine (MTA), a by-product of polyamine biosynthesis, to produce 5'-methylthioinosine (MTI). Plays an essential role in the purine salvage pathway which allows the parasite to use host cell purines for the synthesis of nucleic acids. This is Adenosine deaminase from Plasmodium vivax (strain Salvador I).